The sequence spans 97 residues: Co-chaperonin GroES (97 aa).

Belongs to the GroES chaperonin family. As to quaternary structure, heptamer of 7 subunits arranged in a ring. Interacts with the chaperonin GroEL.

Its subcellular location is the cytoplasm. In terms of biological role, together with the chaperonin GroEL, plays an essential role in assisting protein folding. The GroEL-GroES system forms a nano-cage that allows encapsulation of the non-native substrate proteins and provides a physical environment optimized to promote and accelerate protein folding. GroES binds to the apical surface of the GroEL ring, thereby capping the opening of the GroEL channel. The protein is Co-chaperonin GroES of Buchnera aphidicola subsp. Geoica urticularia.